A 313-amino-acid polypeptide reads, in one-letter code: Dihydroorotate dehydrogenase B (NAD(+)), catalytic subunit (313 aa).

FMN is bound by residues serine 21 and 45-46 (KA). Substrate contacts are provided by residues lysine 45 and 69-73 (NAIGL). The FMN site is built by asparagine 99 and asparagine 127. A substrate-binding site is contributed by asparagine 127. Cysteine 130 functions as the Nucleophile in the catalytic mechanism. Residues lysine 165 and isoleucine 191 each contribute to the FMN site. Position 192–193 (192–193 (NT)) interacts with substrate. FMN is bound by residues glycine 217, 243 to 244 (GG), and 265 to 266 (GT).

This sequence belongs to the dihydroorotate dehydrogenase family. Type 1 subfamily. As to quaternary structure, heterotetramer of 2 PyrK and 2 PyrD type B subunits. The cofactor is FMN.

Its subcellular location is the cytoplasm. It carries out the reaction (S)-dihydroorotate + NAD(+) = orotate + NADH + H(+). Its pathway is pyrimidine metabolism; UMP biosynthesis via de novo pathway; orotate from (S)-dihydroorotate (NAD(+) route): step 1/1. Its function is as follows. Catalyzes the conversion of dihydroorotate to orotate with NAD(+) as electron acceptor. In Geobacillus kaustophilus (strain HTA426), this protein is Dihydroorotate dehydrogenase B (NAD(+)), catalytic subunit (pyrD).